Here is a 351-residue protein sequence, read N- to C-terminus: MQIASSPFTHNQRSTRRIMLLVILACIPGIIAQTYFFGYGSLIQVMLAMITALLAEGAVLQLRKQPVMARLQDNSALLTALLLGISLPPLAPWWMIVLGTLFAIVIAKQLYGGLGQNPFNPAMVGYVVLLISFPVQMTSWLPPLPLQGTSVGFYDSLLTIFTGYTHSGENIHQLQVGYDGISQATPLDTFKTSLRSQPADQILQQPIFGGVLAGLGWQWVNTGFLVGGLLLLWRKAIHWHIPVSFLLALGGCAAVSWMIAPQSFASPMLHLFSGATMLGAFFIATDPVSASTTPRGRLIFGALIGILVWLIRVYGGYPDSVAFAVLLANITVPLIDHYTQPRVYGHKSGHK.

The next 4 helical transmembrane spans lie at 18-38, 40-60, 87-107, and 121-141; these read IMLLVILACIPGIIAQTYFFG, GSLIQVMLAMITALLAEGAVL, LPPLAPWWMIVLGTLFAIVIA, and PAMVGYVVLLISFPVQMTSWL. Threonine 185 carries the post-translational modification FMN phosphoryl threonine. Transmembrane regions (helical) follow at residues 211–231, 241–261, 264–284, 298–318, and 321–341; these read VLAGLGWQWVNTGFLVGGLLL, IPVSFLLALGGCAAVSWMIAP, FASPMLHLFSGATMLGAFFIA, LIFGALIGILVWLIRVYGGYP, and VAFAVLLANITVPLIDHYTQP.

Belongs to the NqrB/RnfD family. As to quaternary structure, the complex is composed of six subunits: RnfA, RnfB, RnfC, RnfD, RnfE and RnfG. Requires FMN as cofactor.

It is found in the cell inner membrane. Part of a membrane-bound complex that couples electron transfer with translocation of ions across the membrane. The polypeptide is Ion-translocating oxidoreductase complex subunit D (Yersinia pestis).